The sequence spans 152 residues: D-aminoacyl-tRNA deacylase 1 (152 aa).

Positions 140-141 (GP) match the Gly-cisPro motif, important for rejection of L-amino acids motif.

The protein belongs to the DTD family. As to quaternary structure, homodimer.

The protein localises to the cytoplasm. It catalyses the reaction glycyl-tRNA(Ala) + H2O = tRNA(Ala) + glycine + H(+). The catalysed reaction is a D-aminoacyl-tRNA + H2O = a tRNA + a D-alpha-amino acid + H(+). An aminoacyl-tRNA editing enzyme that deacylates mischarged D-aminoacyl-tRNAs. Hydrolyzes correctly charged, achiral, glycyl-tRNA(Gly). Deacylates mischarged D.melanogaster and E.coli glycyl-tRNA(Ala), protecting cells against glycine mischarging by AlaRS. Acts via tRNA-based rather than protein-based catalysis; rejects L-amino acids rather than detecting D-amino acids in the active site. By recycling D-aminoacyl-tRNA to D-amino acids and free tRNA molecules, this enzyme counteracts the toxicity associated with the formation of D-aminoacyl-tRNA entities in vivo and helps enforce protein L-homochirality. In Leishmania major, this protein is D-aminoacyl-tRNA deacylase 1 (dtd1).